We begin with the raw amino-acid sequence, 51 residues long: Insulin (51 aa).

3 disulfide bridges follow: C7–C37, C19–C50, and C36–C41.

Belongs to the insulin family. Heterodimer of a B chain and an A chain linked by two disulfide bonds.

It is found in the secreted. In terms of biological role, insulin decreases blood glucose concentration. It increases cell permeability to monosaccharides, amino acids and fatty acids. It accelerates glycolysis, the pentose phosphate cycle, and glycogen synthesis in liver. This Balaenoptera physalus (Fin whale) protein is Insulin (INS).